The sequence spans 468 residues: GTPase Der (468 aa).

EngA-type G domains follow at residues Pro-3–Asp-169 and Ile-199–Thr-372. GTP contacts are provided by residues Gly-9 to Ser-16, Asp-56 to Phe-60, Asn-119 to Glu-122, Gly-205 to Ser-212, Asp-252 to Leu-256, and Asn-317 to Asp-320. Positions Cys-373–His-457 constitute a KH-like domain.

This sequence belongs to the TRAFAC class TrmE-Era-EngA-EngB-Septin-like GTPase superfamily. EngA (Der) GTPase family. As to quaternary structure, associates with the 50S ribosomal subunit.

Its function is as follows. GTPase that plays an essential role in the late steps of ribosome biogenesis. This chain is GTPase Der, found in Verminephrobacter eiseniae (strain EF01-2).